Here is a 745-residue protein sequence, read N- to C-terminus: MKESFYIEGMTCTACSSGIERSLGRKSFVKKIEVNLLNKSANIEFNENETNLDEIFKLIEKLGYSPKKTLAEEKKEFFSPNVKLALAVIFTLFVVYLSMGAMLSPSLLPKSLLAIDNHSNFLNACLQLIGTLIVMHWGRDFYIQGFKALWHRQPNMSSLIAIGTSAALISSLWQLYLVYTDHYTDQWSYGHYYFESVCVILMFVMVGKRIENVSKDKALDAMQALMKNAPKTALKIQNDQQIEVLVDSIVVGDILKVLPGTLIAVDGEIIEGEGELDESMLSGEALPVYKKVGDKVFSGTFNSHTSFLMKATQNNKNSTLSQIVEMIHNAQSSKAEISRLADKVSSVFVPSVIAIAILAFVVWLIIAPKPDFWWNFGIALEVFVSVLVISCPCALGLATLMSILVANQKASSLGLFFKDAKSLEKARLVNTIVFDKTGTLTNGKPVVKSVHSKIELLELLSLANSIEKSSEHVIAKGIVEYAKEHNAPLKEMSEVKVKTGFGISAKTDYQGTKEIIKVGNSEFFNPINTLEIQENGILVLVGRAINEKEDELLGAFVLEDLPKKGVKEHVAQIKNLGINTFLLSGDNRENVKKCALELGIDGYISNAKPQDKLNKIKELKEKGRIVMMVGDGLNDAPSLAMSDVAVVMAKGSDVSVQAADIVSFNNDIKSVYSAIKLSQATIKNIKENLFWAFCYNSVFIPLACGVLYKANIMLSPAIAGLAMSLSSVSVVLNSQRLRNFKIKDH.

Residues 1–67 enclose the HMA domain; it reads MKESFYIEGM…LIEKLGYSPK (67 aa). Residues 1–83 lie on the Cytoplasmic side of the membrane; the sequence is MKESFYIEGM…KKEFFSPNVK (83 aa). Cu cation is bound by residues cysteine 12 and cysteine 15. The chain crosses the membrane as a helical span at residues 84-104; that stretch reads LALAVIFTLFVVYLSMGAMLS. Over 105–124 the chain is Extracellular; sequence PSLLPKSLLAIDNHSNFLNA. Residues 125-144 form a helical membrane-spanning segment; sequence CLQLIGTLIVMHWGRDFYIQ. At 145 to 151 the chain is on the cytoplasmic side; the sequence is GFKALWH. Residues 152-172 traverse the membrane as a helical segment; that stretch reads RQPNMSSLIAIGTSAALISSL. The Extracellular segment spans residues 173-194; it reads WQLYLVYTDHYTDQWSYGHYYF. A helical transmembrane segment spans residues 195–215; sequence ESVCVILMFVMVGKRIENVSK. Over 216–343 the chain is Cytoplasmic; it reads DKALDAMQAL…KAEISRLADK (128 aa). The helical transmembrane segment at 344-366 threads the bilayer; the sequence is VSSVFVPSVIAIAILAFVVWLII. Over 367–379 the chain is Extracellular; it reads APKPDFWWNFGIA. Residues 380 to 397 traverse the membrane as a helical segment; that stretch reads LEVFVSVLVISCPCALGL. Residues 398-685 are Cytoplasmic-facing; that stretch reads ATLMSILVAN…KLSQATIKNI (288 aa). Catalysis depends on aspartate 435, which acts as the 4-aspartylphosphate intermediate. Positions 631 and 635 each coordinate Mg(2+). Residues 686 to 705 form a helical membrane-spanning segment; the sequence is KENLFWAFCYNSVFIPLACG. Over 706 to 716 the chain is Extracellular; the sequence is VLYKANIMLSP. A helical membrane pass occupies residues 717–735; sequence AIAGLAMSLSSVSVVLNSQ. Topologically, residues 736-745 are cytoplasmic; it reads RLRNFKIKDH.

Belongs to the cation transport ATPase (P-type) (TC 3.A.3) family. Type IB subfamily.

The protein resides in the cell membrane. The enzyme catalyses Cu(2+)(in) + ATP + H2O = Cu(2+)(out) + ADP + phosphate + H(+). In terms of biological role, probably involved in copper export. This Helicobacter pylori (Campylobacter pylori) protein is Copper-transporting ATPase (copA).